We begin with the raw amino-acid sequence, 196 residues long: Small ribosomal subunit protein uS5 (196 aa).

One can recognise an S5 DRBM domain in the interval 17-80; the sequence is FEEKMLFVNR…AVARKNMITV (64 aa). A disordered region spans residues 164–196; it reads GTEVRPSLSSDSPAGRSATTEAGEGVADTGGMQ. Over residues 170 to 183 the composition is skewed to polar residues; that stretch reads SLSSDSPAGRSATT.

It belongs to the universal ribosomal protein uS5 family. Part of the 30S ribosomal subunit. Contacts proteins S4 and S8.

Its function is as follows. With S4 and S12 plays an important role in translational accuracy. Located at the back of the 30S subunit body where it stabilizes the conformation of the head with respect to the body. The chain is Small ribosomal subunit protein uS5 from Deinococcus radiodurans (strain ATCC 13939 / DSM 20539 / JCM 16871 / CCUG 27074 / LMG 4051 / NBRC 15346 / NCIMB 9279 / VKM B-1422 / R1).